We begin with the raw amino-acid sequence, 745 residues long: Receptor-type adenylate cyclase (745 aa).

The Extracellular portion of the chain corresponds to 1-341 (GELGQTDRFF…NEGALTRAQL (341 aa)). 4 N-linked (GlcNAc...) asparagine glycosylation sites follow: Asn-15, Asn-50, Asn-189, and Asn-312. The chain crosses the membrane as a helical span at residues 342-362 (IGVVVGTIFAVLLLLALGIVL). The Cytoplasmic portion of the chain corresponds to 363–745 (CVALRNTRDN…GSDEVARTCV (383 aa)). In terms of domain architecture, Guanylate cyclase spans 384-538 (TLIFTDIESS…RTPNLAARTE (155 aa)). Residues Asp-389 and Asp-432 each contribute to the Mg(2+) site.

This sequence belongs to the adenylyl cyclase class-3 family. Mg(2+) serves as cofactor.

It localises to the cell membrane. The enzyme catalyses ATP = 3',5'-cyclic AMP + diphosphate. Its function is as follows. Could act as a receptor for an unknown ligand. In Trypanosoma congolense, this protein is Receptor-type adenylate cyclase.